Here is a 242-residue protein sequence, read N- to C-terminus: Ribonuclease PH (242 aa).

Phosphate contacts are provided by residues Arg-89 and 127–129; that span reads GTR.

The protein belongs to the RNase PH family. Homohexameric ring arranged as a trimer of dimers.

The catalysed reaction is tRNA(n+1) + phosphate = tRNA(n) + a ribonucleoside 5'-diphosphate. In terms of biological role, phosphorolytic 3'-5' exoribonuclease that plays an important role in tRNA 3'-end maturation. Removes nucleotide residues following the 3'-CCA terminus of tRNAs; can also add nucleotides to the ends of RNA molecules by using nucleoside diphosphates as substrates, but this may not be physiologically important. Probably plays a role in initiation of 16S rRNA degradation (leading to ribosome degradation) during starvation. The protein is Ribonuclease PH of Neisseria gonorrhoeae (strain ATCC 700825 / FA 1090).